The primary structure comprises 105 residues: Cell division protein FtsB (105 aa).

Residues 1–3 lie on the Cytoplasmic side of the membrane; that stretch reads MKP. A helical transmembrane segment spans residues 4–21; the sequence is FVLVLFALLALLQYRLWF. The Periplasmic portion of the chain corresponds to 22 to 105; the sequence is GENSLTEYFT…RSSEQSQDNQ (84 aa). The stretch at 38 to 75 forms a coiled coil; the sequence is HQQSGNAELLERNEVLKEEIQDLKSGTEALEERARNEL.

Belongs to the FtsB family. As to quaternary structure, part of a complex composed of FtsB, FtsL and FtsQ.

It is found in the cell inner membrane. Essential cell division protein. May link together the upstream cell division proteins, which are predominantly cytoplasmic, with the downstream cell division proteins, which are predominantly periplasmic. In Shewanella amazonensis (strain ATCC BAA-1098 / SB2B), this protein is Cell division protein FtsB.